The following is a 264-amino-acid chain: Taurine import ATP-binding protein TauB (264 aa).

Residues Leu4–Ala233 enclose the ABC transporter domain. Gly38–Thr45 serves as a coordination point for ATP.

The protein belongs to the ABC transporter superfamily. Taurine importer (TC 3.A.1.17.1) family. In terms of assembly, the complex is composed of two ATP-binding proteins (TauB), two transmembrane proteins (TauC) and a solute-binding protein (TauA).

Its subcellular location is the cell inner membrane. It catalyses the reaction taurine(out) + ATP + H2O = taurine(in) + ADP + phosphate + H(+). Part of the ABC transporter complex TauABC involved in taurine import. Responsible for energy coupling to the transport system. In Pseudomonas fluorescens (strain ATCC BAA-477 / NRRL B-23932 / Pf-5), this protein is Taurine import ATP-binding protein TauB.